The primary structure comprises 188 residues: Adenylate kinase (188 aa).

An ATP-binding site is contributed by glycine 12–threonine 17. The interval serine 33–valine 62 is NMP. Residues threonine 34, arginine 39, asparagine 60–valine 62, glycine 87–arginine 90, and glutamine 94 contribute to the AMP site. The LID stretch occupies residues glycine 129–aspartate 135. Arginine 130 contributes to the ATP binding site. AMP-binding residues include arginine 132 and arginine 144. Residue arginine 172 coordinates ATP.

This sequence belongs to the adenylate kinase family. As to quaternary structure, monomer.

Its subcellular location is the cytoplasm. It catalyses the reaction AMP + ATP = 2 ADP. It functions in the pathway purine metabolism; AMP biosynthesis via salvage pathway; AMP from ADP: step 1/1. Functionally, catalyzes the reversible transfer of the terminal phosphate group between ATP and AMP. Plays an important role in cellular energy homeostasis and in adenine nucleotide metabolism. The polypeptide is Adenylate kinase (Campylobacter curvus (strain 525.92)).